A 504-amino-acid polypeptide reads, in one-letter code: ATP synthase subunit alpha 1 (504 aa).

170–177 lines the ATP pocket; the sequence is GDRQIGKT.

It belongs to the ATPase alpha/beta chains family. F-type ATPases have 2 components, CF(1) - the catalytic core - and CF(0) - the membrane proton channel. CF(1) has five subunits: alpha(3), beta(3), gamma(1), delta(1), epsilon(1). CF(0) has three main subunits: a(1), b(2) and c(9-12). The alpha and beta chains form an alternating ring which encloses part of the gamma chain. CF(1) is attached to CF(0) by a central stalk formed by the gamma and epsilon chains, while a peripheral stalk is formed by the delta and b chains.

The protein localises to the cell inner membrane. It carries out the reaction ATP + H2O + 4 H(+)(in) = ADP + phosphate + 5 H(+)(out). Its function is as follows. Produces ATP from ADP in the presence of a proton gradient across the membrane. The alpha chain is a regulatory subunit. The protein is ATP synthase subunit alpha 1 of Syntrophus aciditrophicus (strain SB).